The sequence spans 132 residues: Translation initiation factor 5A (132 aa).

Residue lysine 36 is modified to Hypusine.

Belongs to the eIF-5A family.

It localises to the cytoplasm. Its function is as follows. Functions by promoting the formation of the first peptide bond. In Caldivirga maquilingensis (strain ATCC 700844 / DSM 13496 / JCM 10307 / IC-167), this protein is Translation initiation factor 5A (eIF5A).